Here is a 257-residue protein sequence, read N- to C-terminus: 5-oxoprolinase subunit A (257 aa).

It belongs to the LamB/PxpA family. As to quaternary structure, forms a complex composed of PxpA, PxpB and PxpC.

It carries out the reaction 5-oxo-L-proline + ATP + 2 H2O = L-glutamate + ADP + phosphate + H(+). Its function is as follows. Catalyzes the cleavage of 5-oxoproline to form L-glutamate coupled to the hydrolysis of ATP to ADP and inorganic phosphate. The protein is 5-oxoprolinase subunit A of Fusobacterium nucleatum subsp. nucleatum (strain ATCC 25586 / DSM 15643 / BCRC 10681 / CIP 101130 / JCM 8532 / KCTC 2640 / LMG 13131 / VPI 4355).